We begin with the raw amino-acid sequence, 588 residues long: Adenine deaminase (588 aa).

The protein belongs to the metallo-dependent hydrolases superfamily. Adenine deaminase family. In terms of assembly, homodimer. It depends on Mn(2+) as a cofactor.

It catalyses the reaction adenine + H2O + H(+) = hypoxanthine + NH4(+). The sequence is that of Adenine deaminase from Shigella boydii serotype 4 (strain Sb227).